Consider the following 133-residue polypeptide: Small ribosomal subunit protein eS24z (133 aa).

Residues 104–133 (KSRKQIKERKNRAKKIRGVKKTKAGDAKKK) form a disordered region. Residues 109–125 (IKERKNRAKKIRGVKKT) are compositionally biased toward basic residues.

It belongs to the eukaryotic ribosomal protein eS24 family.

In Arabidopsis thaliana (Mouse-ear cress), this protein is Small ribosomal subunit protein eS24z (RPS24A).